Consider the following 507-residue polypeptide: ATP synthase subunit alpha, chloroplastic (507 aa).

170-177 is an ATP binding site; that stretch reads GDRQTGKT.

It belongs to the ATPase alpha/beta chains family. F-type ATPases have 2 components, CF(1) - the catalytic core - and CF(0) - the membrane proton channel. CF(1) has five subunits: alpha(3), beta(3), gamma(1), delta(1), epsilon(1). CF(0) has four main subunits: a, b, b' and c.

It is found in the plastid. It localises to the chloroplast thylakoid membrane. The catalysed reaction is ATP + H2O + 4 H(+)(in) = ADP + phosphate + 5 H(+)(out). Functionally, produces ATP from ADP in the presence of a proton gradient across the membrane. The alpha chain is a regulatory subunit. The polypeptide is ATP synthase subunit alpha, chloroplastic (Daucus carota (Wild carrot)).